The chain runs to 213 residues: Large ribosomal subunit protein uL1 (213 aa).

Belongs to the universal ribosomal protein uL1 family. As to quaternary structure, part of the 50S ribosomal subunit.

Functionally, binds directly to 23S rRNA. Probably involved in E site tRNA release. Its function is as follows. Protein L1 is also a translational repressor protein, it controls the translation of its operon by binding to its mRNA. The sequence is that of Large ribosomal subunit protein uL1 from Picrophilus torridus (strain ATCC 700027 / DSM 9790 / JCM 10055 / NBRC 100828 / KAW 2/3).